Here is a 141-residue protein sequence, read N- to C-terminus: Nucleoside diphosphate kinase (141 aa).

ATP contacts are provided by K11, F59, R87, T93, R104, and N114. The active-site Pros-phosphohistidine intermediate is H117.

The protein belongs to the NDK family. In terms of assembly, homotetramer. Mg(2+) serves as cofactor.

Its subcellular location is the cytoplasm. The enzyme catalyses a 2'-deoxyribonucleoside 5'-diphosphate + ATP = a 2'-deoxyribonucleoside 5'-triphosphate + ADP. It carries out the reaction a ribonucleoside 5'-diphosphate + ATP = a ribonucleoside 5'-triphosphate + ADP. In terms of biological role, major role in the synthesis of nucleoside triphosphates other than ATP. The ATP gamma phosphate is transferred to the NDP beta phosphate via a ping-pong mechanism, using a phosphorylated active-site intermediate. In Verminephrobacter eiseniae (strain EF01-2), this protein is Nucleoside diphosphate kinase.